The following is a 518-amino-acid chain: 3-octaprenyl-4-hydroxybenzoate carboxy-lyase (518 aa).

Mn(2+) is bound at residue asparagine 177. Residues 180 to 182 (IYR), 194 to 196 (RWL), and 199 to 200 (RG) contribute to the prenylated FMN site. Glutamate 243 contacts Mn(2+). Aspartate 318 acts as the Proton donor in catalysis.

It belongs to the UbiD family. Homohexamer. Prenylated FMN serves as cofactor. Requires Mn(2+) as cofactor.

It is found in the cell membrane. The enzyme catalyses a 4-hydroxy-3-(all-trans-polyprenyl)benzoate + H(+) = a 2-(all-trans-polyprenyl)phenol + CO2. It functions in the pathway cofactor biosynthesis; ubiquinone biosynthesis. In terms of biological role, catalyzes the decarboxylation of 3-octaprenyl-4-hydroxy benzoate to 2-octaprenylphenol, an intermediate step in ubiquinone biosynthesis. In Burkholderia orbicola (strain AU 1054), this protein is 3-octaprenyl-4-hydroxybenzoate carboxy-lyase.